A 730-amino-acid polypeptide reads, in one-letter code: Semaphorin-1A (730 aa).

An N-terminal signal peptide occupies residues Met-1–Ala-20. Over Trp-21–Thr-630 the chain is Extracellular. Residues Lys-28–Leu-490 enclose the Sema domain. N-linked (GlcNAc...) asparagine glycans are attached at residues Asn-44 and Asn-71. Disulfide bonds link Cys-97/Cys-107 and Cys-125/Cys-134. 2 N-linked (GlcNAc...) asparagine glycosylation sites follow: Asn-163 and Asn-267. 2 disulfide bridges follow: Cys-244–Cys-358 and Cys-268–Cys-317. Asn-360 is a glycosylation site (N-linked (GlcNAc...) asparagine). Intrachain disulfides connect Cys-493–Cys-512 and Cys-504–Cys-521. Asn-539 is a glycosylation site (N-linked (GlcNAc...) asparagine). A helical membrane pass occupies residues Ile-631–Phe-651. Residues Ser-652 to Ile-730 lie on the Cytoplasmic side of the membrane. The span at Ala-708 to Lys-720 shows a compositional bias: low complexity. Positions Ala-708–Ile-730 are disordered.

The protein belongs to the semaphorin family. As to expression, dynamically expressed on a subset of axon pathways in the developing CNS and on circumferential bands of epithelial cells in developing limb buds.

The protein resides in the membrane. Functionally, plays a role in growth cones guidance. This is Semaphorin-1A (SEMA-1A) from Schistocerca americana (American grasshopper).